Here is a 297-residue protein sequence, read N- to C-terminus: tRNA pseudouridine synthase B (297 aa).

The active-site Nucleophile is aspartate 44.

It belongs to the pseudouridine synthase TruB family. Type 1 subfamily.

The enzyme catalyses uridine(55) in tRNA = pseudouridine(55) in tRNA. Functionally, responsible for synthesis of pseudouridine from uracil-55 in the psi GC loop of transfer RNAs. This is tRNA pseudouridine synthase B from Corynebacterium glutamicum (strain ATCC 13032 / DSM 20300 / JCM 1318 / BCRC 11384 / CCUG 27702 / LMG 3730 / NBRC 12168 / NCIMB 10025 / NRRL B-2784 / 534).